The primary structure comprises 241 residues: Ribose-5-phosphate isomerase A (241 aa).

Substrate contacts are provided by residues 29–32 (TGTT), 84–87 (DGAD), and 97–100 (KGGG). Glu-106 serves as the catalytic Proton acceptor. A substrate-binding site is contributed by Lys-124.

It belongs to the ribose 5-phosphate isomerase family. Homodimer.

It catalyses the reaction aldehydo-D-ribose 5-phosphate = D-ribulose 5-phosphate. The protein operates within carbohydrate degradation; pentose phosphate pathway; D-ribose 5-phosphate from D-ribulose 5-phosphate (non-oxidative stage): step 1/1. Catalyzes the reversible conversion of ribose-5-phosphate to ribulose 5-phosphate. In Thermoplasma acidophilum (strain ATCC 25905 / DSM 1728 / JCM 9062 / NBRC 15155 / AMRC-C165), this protein is Ribose-5-phosphate isomerase A.